Here is a 310-residue protein sequence, read N- to C-terminus: Probable manganese-dependent inorganic pyrophosphatase (310 aa).

Positions 9, 13, 15, 75, 97, and 149 each coordinate Mn(2+).

This sequence belongs to the PPase class C family. The cofactor is Mn(2+).

It is found in the cytoplasm. It carries out the reaction diphosphate + H2O = 2 phosphate + H(+). The sequence is that of Probable manganese-dependent inorganic pyrophosphatase from Brevibacillus brevis (strain 47 / JCM 6285 / NBRC 100599).